A 729-amino-acid chain; its full sequence is Polyribonucleotide nucleotidyltransferase (729 aa).

The Mg(2+) site is built by D485 and D491. Residues 552–611 (PRITTMKVAEDKIRTIIGKGGATIKGLIESTGVSIDIDDSGVVQLFSPDKMALEEAQKQI) form the KH domain. The S1 motif domain occupies 621–689 (GQTYQGKVSK…KQGRVKLEWK (69 aa)).

The protein belongs to the polyribonucleotide nucleotidyltransferase family. As to quaternary structure, component of the RNA degradosome, which is a multiprotein complex involved in RNA processing and mRNA degradation. Mg(2+) serves as cofactor.

Its subcellular location is the cytoplasm. The enzyme catalyses RNA(n+1) + phosphate = RNA(n) + a ribonucleoside 5'-diphosphate. Functionally, involved in mRNA degradation. Catalyzes the phosphorolysis of single-stranded polyribonucleotides processively in the 3'- to 5'-direction. The chain is Polyribonucleotide nucleotidyltransferase from Legionella pneumophila subsp. pneumophila (strain Philadelphia 1 / ATCC 33152 / DSM 7513).